Consider the following 580-residue polypeptide: Mucin-1 (580 aa).

An N-terminal signal peptide occupies residues Met1–Ala22. Residues Asn23 to Ala489 are Extracellular-facing. Residues Thr28–Arg37 are compositionally biased toward polar residues. The interval Thr28–Pro359 is disordered. Residues Thr38–Ser88 are compositionally biased toward low complexity. 11 tandem repeats follow at residues Pro70–Ser89, Pro90–Ser109, Pro110–Ser129, Pro130–Ser149, Pro150–Ser169, Pro170–Ser189, Pro190–Ser209, Pro210–Ser229, Pro230–Ser249, Pro250–Ser269, and Pro270–Ser289. The 11 X 20 AA approximate tandem repeats of P-A-P-S-P-A-A-S-P-G-H-D-G-A-S-T-P-T-S-S stretch occupies residues Pro70 to Ser289. O-linked (GalNAc...) serine glycosylation is found at Ser73, Ser77, and Ser84. Residues Thr85 and Thr87 are each glycosylated (O-linked (GalNAc...) threonine). O-linked (GalNAc...) serine glycans are attached at residues Ser88 and Ser89. 9 stretches are compositionally biased toward low complexity: residues Ala96 to Ser108, Ala116 to Ser128, Ala136 to Ser148, Ala156 to Gly168, Ala176 to Ser188, Ala196 to Gly208, Ala216 to Ser228, Ala236 to Gly248, and Ala256 to Ser306. Asn161 carries an N-linked (GlcNAc...) asparagine glycan. Asn201 carries N-linked (GlcNAc...) asparagine glycosylation. N-linked (GlcNAc...) asparagine glycosylation is present at Asn241. A compositionally biased stretch (polar residues) spans His308–Thr344. Residues Ala345–Ser357 show a composition bias toward low complexity. Residues Arg368 to Ser475 enclose the SEA domain. Residues Asn384 and Asn460 are each glycosylated (N-linked (GlcNAc...) asparagine). Residues Leu490–Val510 traverse the membrane as a helical segment. 2 S-palmitoyl cysteine lipidation sites follow: Cys511 and Cys513. The Cytoplasmic portion of the chain corresponds to Cys511–Leu580. Residues Glu519–Pro555 are interaction with P53. At Tyr530 the chain carries Phosphotyrosine; by PDGFR. The Interaction with GRB2 motif lies at Tyr530 to Met533. Tyr539 is modified (phosphotyrosine). The tract at residues Arg544–Asn563 is disordered. The residue at position 545 (Tyr545) is a Phosphotyrosine; by PDGFR. The segment at Ser550 to Glu557 is required for interaction with GSK3B. The residue at position 551 (Thr551) is a Phosphothreonine; by PKC/PRKCD. Ser554 carries the phosphoserine; by GSK3-beta modification. Tyr556 is modified (phosphotyrosine; by CSK, EGFR and SRC). The Interaction with SRC and ESR1 motif lies at Tyr556 to Val559. The tract at residues Ser560 to Leu568 is required for interaction with beta- and gamma-catenins. Tyr570 is subject to Phosphotyrosine. Residues Tyr570–Asn572 carry the Required for interaction with AP1S2 motif.

The alpha subunit forms a tight, non-covalent heterodimeric complex with the proteolytically-released beta subunit. Binds directly the SH2 domain of GRB2, and forms a MUC1/GRB2/SOS1 complex involved in RAS signaling. The cytoplasmic tail (MUC1CT) interacts with several proteins such as, SRC, CTNNB1 and ERBs. Interaction with the SH2 domain of CSK decreases interaction with GSK3B. Interacts with CTNNB1/beta-catenin and JUP/gamma-catenin and promotes cell adhesion. Interaction with JUP/gamma-catenin is induced by heregulin. Binds PRKCD, ERBB2, ERBB3 and ERBB4. Heregulin (HRG) stimulates the interaction with ERBB2 and, to a much lesser extent, the interaction with ERBB3 and ERBB4. Interacts with P53 in response to DNA damage. Interacts with KLF4. Interacts with estrogen receptor alpha/ESR1, through its DNA-binding domain, and stimulates its transcription activity. Binds ADAM17. In terms of processing, highly glycosylated (N- and O-linked carbohydrates and sialic acid). O-linked glycosylation consists mainly of GalNAc, galactose, and sialic acid. The ratio from pools of milk from different dairy breeds is GalNAc: GlcNAc:galactose:mannose:sialic acid is 14:1:10:1:15. Post-translationally, proteolytic cleavage in the SEA domain occurs in the endoplasmic reticulum by an autoproteolytic mechanism and requires the full-length SEA domain as well as requiring a Ser, Thr or Cys residue at the P + 1 site. Ectodomain shedding is mediated by ADAM17 in uterine epithelial cells. Dual palmitoylation on cysteine residues in the CQC motif is required for recycling from endosomes back to the plasma membrane. In terms of processing, phosphorylated on tyrosines and serine residues in the C-terminal. Phosphorylation on tyrosines in the C-terminal increases the nuclear location of MUC1 and beta-catenin. Phosphorylation by PKC delta induces binding of MUC1 to beta-catenin/CTNNB1 and thus decreases the formation of the beta-catenin/E-cadherin complex. Src-mediated phosphorylation inhibits interaction with GSK3B. Csk- or Src- or EGFR-mediated phosphorylation on Tyr-556 increases binding to beta-catenin/CTNNB1. GSK3B-mediated phosphorylation on Ser-554 decreases this interaction but restores the formation of the beta-cadherin/E-cadherin complex. On T-cell receptor activation, phosphorylated by LCK. PDGFR-mediated phosphorylation increases nuclear colocalization of MUC1CT and CTNNB1. As to expression, expressed on the apical surface of epithelia cells, and on the milk fat globule membrane (MGGM).

The protein resides in the apical cell membrane. The protein localises to the cell membrane. Its subcellular location is the cytoplasm. It localises to the nucleus. In terms of biological role, the alpha subunit has cell adhesive properties. May provide a protective layer on epithelial cells against bacterial and enzyme attack. Functionally, the beta subunit contains a C-terminal domain which is involved in cell signaling, through phosphorylations and protein-protein interactions. Modulates signaling in ERK, Src and NF-kappa-B pathways. In activated T-cells, influences directly or indirectly the Ras/MAPK pathway. Promotes tumor progression. Regulates P53-mediated transcription and determines cell fate in the genotoxic stress response. Binds, together with KLF4, the PE21 promoter element of P53 and represses P53 activity. The polypeptide is Mucin-1 (MUC1) (Bos taurus (Bovine)).